We begin with the raw amino-acid sequence, 331 residues long: UDP-glucose 4-epimerase (331 aa).

Residues 11 to 12 (YI), 31 to 36 (DNLITG), 51 to 52 (DI), 73 to 77 (FAAFS), Asn-92, Thr-117, Tyr-141, Lys-145, and Phe-169 each bind NAD(+). Residues Thr-117 and Tyr-141 each coordinate substrate. Tyr-141 functions as the Proton acceptor in the catalytic mechanism. Substrate-binding positions include Asn-170, 189-190 (HI), 206-208 (QIY), Arg-221, and 282-285 (RAGD).

The protein belongs to the NAD(P)-dependent epimerase/dehydratase family. Homodimer. The cofactor is NAD(+).

The enzyme catalyses UDP-alpha-D-glucose = UDP-alpha-D-galactose. It functions in the pathway carbohydrate metabolism; galactose metabolism. The chain is UDP-glucose 4-epimerase (galE) from Lacticaseibacillus casei (Lactobacillus casei).